A 645-amino-acid chain; its full sequence is 1,4-alpha-glucan branching enzyme GlgB (645 aa).

The Nucleophile role is filled by D309. The Proton donor role is filled by E352. The disordered stretch occupies residues 619 to 645 (VKTRKGSKKQDGSKTKVRSNVTSRGKR). Residues 636 to 645 (RSNVTSRGKR) are compositionally biased toward polar residues.

The protein belongs to the glycosyl hydrolase 13 family. GlgB subfamily. As to quaternary structure, monomer.

It catalyses the reaction Transfers a segment of a (1-&gt;4)-alpha-D-glucan chain to a primary hydroxy group in a similar glucan chain.. The protein operates within glycan biosynthesis; glycogen biosynthesis. Its function is as follows. Catalyzes the formation of the alpha-1,6-glucosidic linkages in glycogen by scission of a 1,4-alpha-linked oligosaccharide from growing alpha-1,4-glucan chains and the subsequent attachment of the oligosaccharide to the alpha-1,6 position. The chain is 1,4-alpha-glucan branching enzyme GlgB from Bacillus cereus (strain AH820).